Consider the following 206-residue polypeptide: Octanoyltransferase (206 aa).

The region spanning 30–206 is the BPL/LPL catalytic domain; that stretch reads PETNDEIWLV…EFVTLLNNSI (177 aa). Residues 69–76, 137–139, and 150–152 each bind substrate; these read RGGQVTYH, SLG, and GIA. Residue Cys168 is the Acyl-thioester intermediate of the active site.

It belongs to the LipB family.

It is found in the cytoplasm. It catalyses the reaction octanoyl-[ACP] + L-lysyl-[protein] = N(6)-octanoyl-L-lysyl-[protein] + holo-[ACP] + H(+). The protein operates within protein modification; protein lipoylation via endogenous pathway; protein N(6)-(lipoyl)lysine from octanoyl-[acyl-carrier-protein]: step 1/2. In terms of biological role, catalyzes the transfer of endogenously produced octanoic acid from octanoyl-acyl-carrier-protein onto the lipoyl domains of lipoate-dependent enzymes. Lipoyl-ACP can also act as a substrate although octanoyl-ACP is likely to be the physiological substrate. The protein is Octanoyltransferase of Francisella tularensis subsp. novicida (strain U112).